The primary structure comprises 211 residues: Thymidylate kinase (211 aa).

7-14 contacts ATP; it reads GMDGSGKT.

This sequence belongs to the thymidylate kinase family.

The catalysed reaction is dTMP + ATP = dTDP + ADP. Phosphorylation of dTMP to form dTDP in both de novo and salvage pathways of dTTP synthesis. This is Thymidylate kinase from Mesoplasma florum (strain ATCC 33453 / NBRC 100688 / NCTC 11704 / L1) (Acholeplasma florum).